Here is an 875-residue protein sequence, read N- to C-terminus: GATOR2 complex protein MIOS (875 aa).

WD repeat units lie at residues 58–100 (SDTP…NSKF), 111–155 (KHAR…TPDI), 182–221 (GQNDASLSLCWLPRDQKLLLAGMHRNLAIFDLRNTSQKMF), 223–261 (NTKAVQGVTVDPYFHDRVASFYEGQVAIWDLRKFEKPVL), 265–306 (EQPK…TPIG), 320–360 (PCDN…SLAW), and 395–437 (RLRA…KQYT). A C4-type zinc finger spans residues 735 to 781 (VSCNFCGKSISYSCSSVPHQGRGFSQYGVSGSPTKSKVTSCPGCRKP). Residues C737 and C740 each coordinate Zn(2+). 2 positions are modified to phosphoserine: S759 and S766. Zn(2+) contacts are provided by C775, C778, C788, C827, C830, H832, H835, H838, C849, C854, and C858. The RING-type; atypical zinc finger occupies 782–863 (LPRCALCLIN…CTCKCMQLDT (82 aa)).

It belongs to the WD repeat mio family. As to quaternary structure, component of the GATOR2 subcomplex, composed of MIOS, SEC13, SEH1L, WDR24 and WDR59. The GATOR2 complex interacts with CASTOR1 and CASTOR2; the interaction is negatively regulated by arginine. CASTOR1 and CASTOR2 convey leucine availability via direct interaction with MIOS. The GATOR2 complex interacts with SESN1, SESN2 and SESN3; the interaction is negatively regulated by amino acids. Interacts with SAR1A and SAR1B; the interaction is direct, disrupted by leucine and mediates the interaction of SAR1A or SAR1B with the GATOR2 complex to negatively regulate the TORC1 signaling upon leucine deprivation. In terms of tissue distribution, widely expressed. In brain, expressed in neurons and glia (oligodendrocytes and astrocytes), with more abundance in neurons.

It localises to the lysosome membrane. With respect to regulation, the GATOR2 complex is negatively regulated by the upstream amino acid sensors CASTOR1 and SESN2, which sequester the GATOR2 complex in absence of amino acids. In the presence of abundant amino acids, GATOR2 is released from CASTOR1 and SESN2 and activated. Its function is as follows. As a component of the GATOR2 complex, functions as an activator of the amino acid-sensing branch of the mTORC1 signaling pathway. The GATOR2 complex indirectly activates mTORC1 through the inhibition of the GATOR1 subcomplex. GATOR2 probably acts as an E3 ubiquitin-protein ligase toward GATOR1. In the presence of abundant amino acids, the GATOR2 complex mediates ubiquitination of the NPRL2 core component of the GATOR1 complex, leading to GATOR1 inactivation. In the absence of amino acids, GATOR2 is inhibited, activating the GATOR1 complex. Within the GATOR2 complex, MIOS is required to prevent autoubiquitination of WDR24, the catalytic subunit of the complex. The GATOR2 complex is required for brain myelination. The protein is GATOR2 complex protein MIOS of Mus musculus (Mouse).